The primary structure comprises 647 residues: TNFAIP3-interacting protein 1 (647 aa).

A coiled-coil region spans residues 39–72; it reads MQGIKMLGELLEESQMEASRLRQKAEELVKDSEL. The span at 61-71 shows a compositional bias: basic and acidic residues; the sequence is QKAEELVKDSE. The tract at residues 61-168 is disordered; it reads QKAEELVKDS…DLGPPPPEDS (108 aa). Ser-77 carries the post-translational modification Phosphoserine. The interval 95–425 is interaction with Nef; it reads TKVQVHPATS…SPLTRQREYQ (331 aa). Residues 102–115 show a composition bias toward low complexity; sequence ATSTAATTTATATT. Residues 143-155 show a composition bias toward polar residues; that stretch reads EEQNSPETGSHPT. Positions 209 to 270 form a coiled coil; it reads SKVHKNEQRT…KKLLMNSSCK (62 aa). Phosphoserine is present on residues Ser-297, Ser-416, and Ser-455. Residues 311-551 adopt a coiled-coil conformation; that stretch reads AAEKKVKLLE…KASGERYHME (241 aa). The required for inhibitory activity of TNF-induced NF-kappa-B activation stretch occupies residues 444-601; that stretch reads ASPSSPPAAF…MEHPPPHPNS (158 aa). A ubiquitin-binding domain (UBD) region spans residues 465–523; sequence KQELVTQNELLKQQVKIFEEDFQRERSDRERMNEEKEELKKQVEKLQAQVTLTNAQLKT. The short motif at 537–543 is the Nuclear localization signal element; that stretch reads QKRKAKA. Position 565 is a phosphotyrosine (Tyr-565). The residue at position 584 (Arg-584) is an Asymmetric dimethylarginine. Arg-612 bears the Asymmetric dimethylarginine; alternate mark. Omega-N-methylarginine; alternate is present on Arg-612. A disordered region spans residues 613 to 647; sequence PPCAGIRNQSSQVMDPPPDRPAEPESADNDCDGPQ. Positions 637–647 are enriched in acidic residues; the sequence is ESADNDCDGPQ. Ser-638 is subject to Phosphoserine.

Interacts with TNFAIP3 and IKBKG (polyubiquitinated); facilitates TNFAIP3-mediated de-ubiquitination of NEMO/IKBKG. Interacts with polyubiquitin. Interacts with MAPK1, SELPLG and PIK3CD. Interacts with IRAK1 (polyubiquitinated). Interacts with MYD88; the interaction is indicative for participation in an activated TLR-signaling complex. Interacts with TAX1BP1. In terms of processing, phosphorylation at Tyr-565 by SRC-family kinases recruits phosphoinositide-3-kinase (PI3K) PIK3CD:p85 heterodimer which results in integrin activation and leukocyte adhesion to activated endothelium during inflammation. Ubiquitous. Abundant in heart and skeletal muscle and expressed at lower levels in thymus, liver, kidney, brain and intestinal tract.

The protein localises to the cytoplasm. It is found in the nucleus. Its function is as follows. Inhibits NF-kappa-B activation and TNF-induced NF-kappa-B-dependent gene expression by regulating TAX1BP1 and A20/TNFAIP3-mediated deubiquitination of IKBKG; proposed to link A20/TNFAIP3 to ubiquitinated IKBKG. Involved in regulation of EGF-induced ERK1/ERK2 signaling pathway; blocks MAPK3/MAPK1 nuclear translocation and MAPK1-dependent transcription. Increases cell surface CD4(T4) antigen expression. Involved in the anti-inflammatory response of macrophages and positively regulates TLR-induced activation of CEBPB. Involved in the prevention of autoimmunity; this function implicates binding to polyubiquitin. Involved in leukocyte integrin activation during inflammation; this function is mediated by association with SELPLG and dependent on phosphorylation by SRC-family kinases. The polypeptide is TNFAIP3-interacting protein 1 (Tnip1) (Mus musculus (Mouse)).